Consider the following 1479-residue polypeptide: DNA-directed RNA polymerase subunit beta'' (1479 aa).

Zn(2+)-binding residues include Cys220, Cys296, Cys303, and Cys306. Disordered stretches follow at residues 618 to 640 and 663 to 756; these read TRAEDSEEEYETLEDEYRTREDE and LEDE…KKEG. Composition is skewed to acidic residues over residues 622 to 631, 704 to 717, and 731 to 749; these read DSEEEYETLE, DEYGTIEEDSEDEY, and LEEDSEEDSEDEYESPEED.

This sequence belongs to the RNA polymerase beta' chain family. RpoC2 subfamily. In terms of assembly, in plastids the minimal PEP RNA polymerase catalytic core is composed of four subunits: alpha, beta, beta', and beta''. When a (nuclear-encoded) sigma factor is associated with the core the holoenzyme is formed, which can initiate transcription. Zn(2+) serves as cofactor.

The protein resides in the plastid. The protein localises to the chloroplast. It catalyses the reaction RNA(n) + a ribonucleoside 5'-triphosphate = RNA(n+1) + diphosphate. DNA-dependent RNA polymerase catalyzes the transcription of DNA into RNA using the four ribonucleoside triphosphates as substrates. The sequence is that of DNA-directed RNA polymerase subunit beta'' from Triticum aestivum (Wheat).